We begin with the raw amino-acid sequence, 237 residues long: MTMADKRRRVLLKLSGEAFGGGQLGVNPDIVSGIAREIAQAATDVEIAIVVGGGNFFRGAELSQRGMDRGRADYMGMLGTVMNSLALQDFLEQAGAETRVQSAIEMIQVAEPYIPLRAERHLEKGRIVIFGAGAGLPYFSTDTVAAQRALEIIADVVLVAKNGVDGMYDDDPRTNPDARKIDQISHQEALKQNLKAVDSTALSLCMDNGMPMRIFGMEPAGNVTAALLGAEIGTLLG.

13–16 (KLSG) is an ATP binding site. Glycine 53 is a binding site for UMP. Glycine 54 and arginine 58 together coordinate ATP. Residues aspartate 73 and 134 to 141 (AGLPYFST) each bind UMP. Positions 162, 168, and 171 each coordinate ATP.

It belongs to the UMP kinase family. Homohexamer.

The protein resides in the cytoplasm. The enzyme catalyses UMP + ATP = UDP + ADP. It functions in the pathway pyrimidine metabolism; CTP biosynthesis via de novo pathway; UDP from UMP (UMPK route): step 1/1. With respect to regulation, inhibited by UTP. In terms of biological role, catalyzes the reversible phosphorylation of UMP to UDP. The chain is Uridylate kinase from Leifsonia xyli subsp. xyli (strain CTCB07).